The sequence spans 362 residues: Protein indeterminate-domain 16 (362 aa).

The segment at 1 to 22 (MELTQPIRENGDPQGHQLTDPD) is disordered. 2 consecutive C2H2-type zinc fingers follow at residues 39–61 (YVCE…RRRH) and 82–112 (YVCP…RRKH). The segment at 118–142 (WVCERCSKGYAVQSDYKAHLKTCGS) adopts a CCHC-type 1; atypical zinc-finger fold. Zn(2+) is bound by residues C120, C123, H136, C140, C147, C149, H162, and C166. Residues 145–168 (HSCDCGRVFSRVESFIEHQDTCTI) form a CCHC-type 2; atypical zinc finger. Residues 155 to 167 (RVESFIEHQDTCT) form an SHR-binding region. The interval 247–278 (SAQARHNEKRETSLTKERANEEARKAEETRQE) is disordered. Residues 251–278 (RHNEKRETSLTKERANEEARKAEETRQE) show a composition bias toward basic and acidic residues. Residues 252–319 (HNEKRETSLT…VREEAIKRIN (68 aa)) adopt a coiled-coil conformation.

In terms of tissue distribution, highly expressed in leaves, hypocotyls, roots, vasculature of cotyledons, floral organs and in the endodermis and vasculaturenof inflorescence stems.

The protein resides in the nucleus. Transcription factor regulating lateral organ morphogenesis and gravitropic responses. Has a redundant role with IDD14 in directing leaf and floral organ morphogenesis. Acts cooperatively with IDD15 to control silique and branche orientation. Involved in the establishment of auxin gradients through the regulation of auxin biosynthesis and transport. The protein is Protein indeterminate-domain 16 of Arabidopsis thaliana (Mouse-ear cress).